The sequence spans 831 residues: Molybdenum cofactor sulfurase (831 aa).

At Lys262 the chain carries N6-(pyridoxal phosphate)lysine. Cys422 is an active-site residue. Residues 651-823 (AWLSEFLGKP…LSIGSHVIPK (173 aa)) form the MOSC domain.

Belongs to the class-V pyridoxal-phosphate-dependent aminotransferase family. MOCOS subfamily. Requires pyridoxal 5'-phosphate as cofactor.

It catalyses the reaction Mo-molybdopterin + L-cysteine + AH2 = thio-Mo-molybdopterin + L-alanine + A + H2O. It participates in cofactor biosynthesis; molybdopterin biosynthesis. In terms of biological role, sulfurates the molybdenum cofactor. Sulfation of molybdenum is essential for xanthine dehydrogenase (XDH) and aldehyde oxidase (ADO) enzymes in which molybdenum cofactor is liganded by 1 oxygen and 1 sulfur atom in active form. The chain is Molybdenum cofactor sulfurase (mocos) from Danio rerio (Zebrafish).